The primary structure comprises 610 residues: Elongation factor 4 (610 aa).

The tr-type G domain maps to 14–196; the sequence is NRIRNFSIIA…ALVANIPPPK (183 aa). Residues 26-31 and 143-146 contribute to the GTP site; these read DHGKST and NKID.

It belongs to the TRAFAC class translation factor GTPase superfamily. Classic translation factor GTPase family. LepA subfamily.

It localises to the cell inner membrane. It catalyses the reaction GTP + H2O = GDP + phosphate + H(+). Its function is as follows. Required for accurate and efficient protein synthesis under certain stress conditions. May act as a fidelity factor of the translation reaction, by catalyzing a one-codon backward translocation of tRNAs on improperly translocated ribosomes. Back-translocation proceeds from a post-translocation (POST) complex to a pre-translocation (PRE) complex, thus giving elongation factor G a second chance to translocate the tRNAs correctly. Binds to ribosomes in a GTP-dependent manner. This chain is Elongation factor 4, found in Legionella pneumophila (strain Paris).